The primary structure comprises 289 residues: Bidirectional sugar transporter SWEET15 (289 aa).

Over 1–10 (MAMAMANHHT) the chain is Extracellular. A helical transmembrane segment spans residues 11–31 (LGLIFGILGNIISFLVYFAPA). Residues 14 to 100 (IFGILGNIIS…LYFFYAPMQA (87 aa)) enclose the MtN3/slv 1 domain. Residues 32-45 (PTFYRIYKRKSAEG) are Cytoplasmic-facing. Residues 46-66 (FHSLPYIVALFSAMLWLYYAL) traverse the membrane as a helical segment. Residues 67-70 (LKKD) lie on the Extracellular side of the membrane. A helical transmembrane segment spans residues 71–91 (AFLLITINSFGCAIESFYILL). Residues 92 to 106 (YFFYAPMQAKKQTLK) are Cytoplasmic-facing. Residues 107-127 (VVISLNVGVFSILVVLIQFLL) traverse the membrane as a helical segment. Residues 128 to 134 (KGSNRIN) lie on the Extracellular side of the membrane. The chain crosses the membrane as a helical span at residues 135–155 (VFGWICASFSVAVFAAPLSIV). A MtN3/slv 2 domain is found at 136-219 (FGWICASFSV…VLYGFYRNAG (84 aa)). Residues 156–167 (AKVIRTKSVEFM) lie on the Cytoplasmic side of the membrane. A helical transmembrane segment spans residues 168–188 (PFSLSFFLTLSAIMWFAYGLL). The Extracellular segment spans residues 189–193 (KNDPC). A helical membrane pass occupies residues 194 to 214 (VAIPNILGVILGLVQMVLYGF). At 215-289 (YRNAGKEKME…GELQPNGSTV (75 aa)) the chain is on the cytoplasmic side. Residues 249–289 (GAQQNGIKKSGSEDVKDDEETGNREKSTENSGELQPNGSTV) form a disordered region. Over residues 277 to 289 (ENSGELQPNGSTV) the composition is skewed to polar residues.

It belongs to the SWEET sugar transporter family. In terms of assembly, forms homooligomers and/or heterooligomers.

Its subcellular location is the cell membrane. Its function is as follows. Mediates both low-affinity uptake and efflux of sugar across the plasma membrane. The polypeptide is Bidirectional sugar transporter SWEET15 (Vitis vinifera (Grape)).